The following is a 440-amino-acid chain: Na(+)/H(+) antiporter NhaA (440 aa).

The next 11 membrane-spanning stretches (helical) occupy residues 25 to 45 (FLHI…VALV), 76 to 96 (LHHV…GLEV), 112 to 132 (TLPI…YLSM), 141 to 161 (GWGI…AILG), 170 to 190 (VLLL…IAIG), 194 to 214 (SLDG…HFLS), 225 to 245 (VIVG…ATLI), 312 to 332 (HPWT…GVLI), 345 to 365 (VVIG…WLVI), 378 to 398 (WPIL…ALFI), and 414 to 434 (GVLV…LWTL).

It belongs to the NhaA Na(+)/H(+) (TC 2.A.33) antiporter family.

Its subcellular location is the cell inner membrane. The enzyme catalyses Na(+)(in) + 2 H(+)(out) = Na(+)(out) + 2 H(+)(in). Functionally, na(+)/H(+) antiporter that extrudes sodium in exchange for external protons. This chain is Na(+)/H(+) antiporter NhaA, found in Rhodopirellula baltica (strain DSM 10527 / NCIMB 13988 / SH1).